Here is a 287-residue protein sequence, read N- to C-terminus: Undecaprenyl-diphosphatase (287 aa).

Helical transmembrane passes span L6–V26, S45–F65, N89–K109, V111–W131, A204–L224, A238–L258, and Y266–A286.

This sequence belongs to the UppP family.

It is found in the cell inner membrane. It catalyses the reaction di-trans,octa-cis-undecaprenyl diphosphate + H2O = di-trans,octa-cis-undecaprenyl phosphate + phosphate + H(+). Functionally, catalyzes the dephosphorylation of undecaprenyl diphosphate (UPP). Confers resistance to bacitracin. This is Undecaprenyl-diphosphatase from Bordetella pertussis (strain Tohama I / ATCC BAA-589 / NCTC 13251).